The primary structure comprises 857 residues: uncharacterized protein (857 aa).

Disordered regions lie at residues 316-339, 484-561, 619-777, and 809-836; these read PPAPSLEQPENKTMPEIKEGTKEN, AKQP…PRTN, GQFP…PKPQ, and EQRPEREAMKRQAQQERENAVKNPSTGK. 3 stretches are compositionally biased toward basic and acidic residues: residues 324 to 339, 518 to 534, and 630 to 640; these read PENKTMPEIKEGTKEN, KKTEELKQSRNTAKAEE, and QRAESSIDKDC. A compositionally biased stretch (polar residues) spans 683–700; that stretch reads RTTTVQPHSHSAQPTTLR. The segment covering 708-725 has biased composition (low complexity); the sequence is SSSLIASAKPAPPISSSS. Over residues 726 to 738 the composition is skewed to polar residues; the sequence is TGPNVTNPNQSSA. A compositionally biased stretch (basic and acidic residues) spans 809–828; it reads EQRPEREAMKRQAQQERENA.

This is an uncharacterized protein from Mus musculus (Mouse).